We begin with the raw amino-acid sequence, 585 residues long: Bestrophin-1 (585 aa).

At 1–31 the chain is on the cytoplasmic side; the sequence is MTITYTSQVANARLGSFSRLLLCWRGSIYKL. Position 10 (Ala-10) interacts with Ca(2+). A helical transmembrane segment spans residues 32–51; that stretch reads LYGEFFIFLLCYYIIRFIYR. Over 52 to 60 the chain is Extracellular; that stretch reads LALTEEQQL. The chain crosses the membrane as a helical span at residues 61–82; the sequence is MFEKLTLYCDSYIQLIPISFVL. Topologically, residues 83 to 237 are cytoplasmic; the sequence is GFYVTLVVTR…DWISIPLVYT (155 aa). Residues 238–255 form a helical membrane-spanning segment; it reads QVVTVAVYSFFLTCLVGR. Over 256–274 the chain is Extracellular; the sequence is QFLNPAKAYPGHELDLVVP. Residues 275–288 form a helical membrane-spanning segment; that stretch reads VFTFLQFFFYVGWL. Residues 289-585 are Cytoplasmic-facing; the sequence is KVAEQLINPF…ALENRDEAHS (297 aa). Ca(2+)-binding residues include Gln-293, Asn-296, Asp-301, and Asp-304. The interval 346-379 is auto-inhibitory segment; sequence PYTAASAQFRRASFMGSTFNISLNKEEMEFQPNQ.

It belongs to the anion channel-forming bestrophin (TC 1.A.46) family. Calcium-sensitive chloride channel subfamily. In terms of assembly, interacts with YWHAG; this interaction promotes the ligand-gated L-glutamate channel activity leading to the positive regulation of NMDA glutamate receptor activity through the L-glutamate secretion.

It localises to the cell membrane. The protein localises to the basolateral cell membrane. It carries out the reaction chloride(in) = chloride(out). The catalysed reaction is hydrogencarbonate(in) = hydrogencarbonate(out). The enzyme catalyses 4-aminobutanoate(in) = 4-aminobutanoate(out). It catalyses the reaction L-glutamate(out) = L-glutamate(in). Ligand-gated anion channel that allows the movement of anions across cell membranes when activated by calcium (Ca2+). Allows the movement of chloride and hydrogencarbonate. Found in a partially open conformation leading to significantly smaller chloride movement. Upon F2R/PAR-1 activation, the sequestered calcium is released into the cytosol of astrocytes, leading to the (Ca2+)-dependent release of L-glutamate into the synaptic cleft that targets the neuronal postsynaptic GRIN2A/NMDAR receptor resulting in the synaptic plasticity regulation. Upon activation of the norepinephrine-alpha-1 adrenergic receptor signaling pathway, transports as well D-serine than L-glutamate in a (Ca2+)-dependent manner, leading to activation of adjacent NMDAR receptors and therefore regulates the heterosynaptic long-term depression and metaplasticity during initial memory acquisition. Releases the 4-aminobutanoate neurotransmitter in a (Ca2+)-dependent manner, and participates in its tonic release from cerebellar glial cells. The polypeptide is Bestrophin-1 (BEST1) (Macaca fascicularis (Crab-eating macaque)).